A 375-amino-acid chain; its full sequence is MFKLKSVNLQVYIMLIAIAVIMAFFSVATDGAYLSARNISNLLRQTSITGXLAIGMVFVIISAEIDLSVGSLMGLLGGFAAIADVWWGFPLPVTIIATIALGLIFGIWNGWWVAYRKVPSFIVTLAGYLAFRGILIGLTNGTTVSPISGTMTVIGQGYLSDIAGVILGGIAVIGFVLWGNYQRRSRQQLQLEVSALSKDFTKYALFAVIVLGAIYLLNDYRGIPFPVLVLAVLAILGLFLSRKTSFGRHVYAIGGNIDAAKLSGINVEKTKLIIFAMNGVLVAIAGLILSARLGAGSPSAGQNAELDAIAACVIGGASLAGGVGSVFGVVIGALIIASLDNGMSMLDVPTFWQYIVKGGILLLAVWIDTSNKKKM.

The next 10 helical transmembrane spans lie at 9 to 29 (LQVY…SVAT), 52 to 72 (LAIG…VGSL), 85 to 105 (VWWG…GLIF), 118 to 138 (VPSF…LIGL), 159 to 179 (LSDI…VLWG), 199 to 219 (DFTK…LLND), 220 to 240 (YRGI…GLFL), 271 to 291 (KLII…ILSA), 319 to 339 (LAGG…IASL), and 348 to 368 (VPTF…VWID).

The protein belongs to the binding-protein-dependent transport system permease family. AraH/RbsC subfamily.

It localises to the cell inner membrane. Its function is as follows. Part of the binding-protein-dependent transport system for D-xylose. Probably responsible for the translocation of the substrate across the membrane. This chain is Xylose transport system permease protein XylH (xylH), found in Haemophilus influenzae (strain ATCC 51907 / DSM 11121 / KW20 / Rd).